Reading from the N-terminus, the 480-residue chain is Protein nucleotidyltransferase YdiU (480 aa).

Positions 86, 88, 89, 109, 121, 122, 172, and 179 each coordinate ATP. The active-site Proton acceptor is the D248. Mg(2+) is bound by residues N249 and D258. D258 lines the ATP pocket.

Belongs to the SELO family. Mg(2+) is required as a cofactor. Requires Mn(2+) as cofactor.

It catalyses the reaction L-seryl-[protein] + ATP = 3-O-(5'-adenylyl)-L-seryl-[protein] + diphosphate. The catalysed reaction is L-threonyl-[protein] + ATP = 3-O-(5'-adenylyl)-L-threonyl-[protein] + diphosphate. The enzyme catalyses L-tyrosyl-[protein] + ATP = O-(5'-adenylyl)-L-tyrosyl-[protein] + diphosphate. It carries out the reaction L-histidyl-[protein] + UTP = N(tele)-(5'-uridylyl)-L-histidyl-[protein] + diphosphate. It catalyses the reaction L-seryl-[protein] + UTP = O-(5'-uridylyl)-L-seryl-[protein] + diphosphate. The catalysed reaction is L-tyrosyl-[protein] + UTP = O-(5'-uridylyl)-L-tyrosyl-[protein] + diphosphate. Nucleotidyltransferase involved in the post-translational modification of proteins. It can catalyze the addition of adenosine monophosphate (AMP) or uridine monophosphate (UMP) to a protein, resulting in modifications known as AMPylation and UMPylation. The chain is Protein nucleotidyltransferase YdiU from Enterobacter sp. (strain 638).